Reading from the N-terminus, the 453-residue chain is Signal transduction histidine-protein kinase ArlS (453 aa).

2 helical membrane passes run 14–34 (ITTL…IFFL) and 157–177 (FVAI…SYIF). Residues 179 to 232 (TQLTKPLVTMSNKMIQIRRDGFQNKLELKTNYEETDNLIDTFNDMMYQIEESFN) form the HAMP domain. In terms of domain architecture, Histidine kinase spans 240–453 (DASHELRTPL…QYTTFKIIFK (214 aa)). Position 243 is a phosphohistidine; by autocatalysis (His243).

Autophosphorylated.

It localises to the cell membrane. It carries out the reaction ATP + protein L-histidine = ADP + protein N-phospho-L-histidine.. Functionally, member of the two-component regulatory system ArlS/ArlR. ArlS probably functions as a sensor protein kinase which is autophosphorylated at a histidine residue and transfers its phosphate group to ArlR. The polypeptide is Signal transduction histidine-protein kinase ArlS (arlS) (Staphylococcus haemolyticus (strain JCSC1435)).